The chain runs to 234 residues: Phosphoribosylaminoimidazole-succinocarboxamide synthase (234 aa).

This sequence belongs to the SAICAR synthetase family.

The catalysed reaction is 5-amino-1-(5-phospho-D-ribosyl)imidazole-4-carboxylate + L-aspartate + ATP = (2S)-2-[5-amino-1-(5-phospho-beta-D-ribosyl)imidazole-4-carboxamido]succinate + ADP + phosphate + 2 H(+). Its pathway is purine metabolism; IMP biosynthesis via de novo pathway; 5-amino-1-(5-phospho-D-ribosyl)imidazole-4-carboxamide from 5-amino-1-(5-phospho-D-ribosyl)imidazole-4-carboxylate: step 1/2. In Staphylococcus aureus (strain MRSA252), this protein is Phosphoribosylaminoimidazole-succinocarboxamide synthase.